Here is a 197-residue protein sequence, read N- to C-terminus: UPF0462 protein C4orf33 homolog (197 aa).

Belongs to the UPF0462 family.

The sequence is that of UPF0462 protein C4orf33 homolog from Danio rerio (Zebrafish).